We begin with the raw amino-acid sequence, 238 residues long: Flagellar L-ring protein (238 aa).

The first 16 residues, 1–16, serve as a signal peptide directing secretion; the sequence is MNKAILAVAMVLLLAG. A lipid anchor (N-palmitoyl cysteine) is attached at Cys17. A lipid anchor (S-diacylglycerol cysteine) is attached at Cys17.

Belongs to the FlgH family. In terms of assembly, the basal body constitutes a major portion of the flagellar organelle and consists of four rings (L,P,S, and M) mounted on a central rod.

Its subcellular location is the cell outer membrane. The protein resides in the bacterial flagellum basal body. Functionally, assembles around the rod to form the L-ring and probably protects the motor/basal body from shearing forces during rotation. The sequence is that of Flagellar L-ring protein from Brucella melitensis biotype 2 (strain ATCC 23457).